Here is a 293-residue protein sequence, read N- to C-terminus: Proline iminopeptidase (293 aa).

Positions 28-277 (KPLVLLHGGP…FSRHMPFVEE (250 aa)) constitute an AB hydrolase-1 domain. Ser104 acts as the Nucleophile in catalysis. Asp244 is a catalytic residue. The active-site Proton donor is the His271.

Belongs to the peptidase S33 family.

The catalysed reaction is Release of N-terminal proline from a peptide.. Functionally, releases the N-terminal proline from various substrates. This is Proline iminopeptidase from Clostridium botulinum (strain Hall / ATCC 3502 / NCTC 13319 / Type A).